The primary structure comprises 479 residues: Glutamyl-tRNA(Gln) amidotransferase subunit A (479 aa).

Residues Lys75 and Ser150 each act as charge relay system in the active site. Ser174 serves as the catalytic Acyl-ester intermediate.

This sequence belongs to the amidase family. GatA subfamily. As to quaternary structure, heterotrimer of A, B and C subunits.

The enzyme catalyses L-glutamyl-tRNA(Gln) + L-glutamine + ATP + H2O = L-glutaminyl-tRNA(Gln) + L-glutamate + ADP + phosphate + H(+). Functionally, allows the formation of correctly charged Gln-tRNA(Gln) through the transamidation of misacylated Glu-tRNA(Gln) in organisms which lack glutaminyl-tRNA synthetase. The reaction takes place in the presence of glutamine and ATP through an activated gamma-phospho-Glu-tRNA(Gln). The protein is Glutamyl-tRNA(Gln) amidotransferase subunit A of Synechococcus elongatus (strain ATCC 33912 / PCC 7942 / FACHB-805) (Anacystis nidulans R2).